Here is a 1070-residue protein sequence, read N- to C-terminus: TSC22 domain family protein 1 (1070 aa).

The tract at residues 1 to 98 is required for interaction with TGFBR1 and promotion of TGF-beta signaling; sequence MHQPPESTAA…SQAQLQAQPL (98 aa). Disordered regions lie at residues 1 to 110, 125 to 289, 458 to 487, 604 to 637, and 830 to 858; these read MHQP…KKSG, ISSN…PASV, VTSE…VGSG, YSQA…STQM, and TSQV…AQTP. Positions 36–45 are enriched in low complexity; that stretch reads GSASALNAAG. Residues 58 to 70 show a composition bias toward pro residues; that stretch reads FPPPSLLQPPPPA. The span at 84-100 shows a compositional bias: low complexity; sequence SLNLLSQAQLQAQPLAP. Residues 133–142 are compositionally biased toward acidic residues; the sequence is EDTESYDDLD. A compositionally biased stretch (basic residues) spans 216–240; that stretch reads HPHHLHHHHHIHHGHHLQHGHHHPS. Over residues 241–250 the composition is skewed to low complexity; sequence HVAVASASIP. Residues 261–271 show a composition bias toward polar residues; sequence KLSTTGSSDSI. Position 263 is a phosphoserine (Ser263). Low complexity-rich tracts occupy residues 272–289 and 465–478; these read TPVA…PASV and TSGS…STRS. Pro residues predominate over residues 611–622; it reads VQTPLPGAPPPQ. Residues 830-845 are compositionally biased toward low complexity; the sequence is TSQVSSAGPSGMPSAP. The span at 849–858 shows a compositional bias: polar residues; it reads VPPQNIAQTP. A leucine-zipper region spans residues 1003-1024; sequence LKEQIKELIEKNSQLEQENNLL. The interval 1034–1070 is disordered; it reads AQFQAQLQTGSPPATTQPQGTTQPPAQPASQGSGPTA. Over residues 1041–1070 the composition is skewed to low complexity; that stretch reads QTGSPPATTQPQGTTQPPAQPASQGSGPTA.

This sequence belongs to the TSC-22/Dip/Bun family. As to quaternary structure, forms homodimers. Forms heterodimers. Component of a complex composed of TSC22D1 (via N-terminus), TGFBR1 and TGFBR2; the interaction between TSC22D1 and TGFBR1 is inhibited by SMAD7 and promoted by TGFB1. Interacts with SMAD7; the interaction requires TGF-beta and the interaction is inhibited by TGFBR1. Interacts with TPT1/fortilin; interaction results in the destabilization of TSC22D1 protein and prevents TSC22D1-mediated apoptosis. Interacts with SMAD4 (via N-terminus). Interacts with ACVRL1/ALK1, ACVR1/ALK2, BMPR1A/ALK3, ACVR1B/ALK4, BMPR1B/ALK6, ACVR2A/ACTRII, and BMPR2. Interacts with SMAD6. Interacts with TFE3; the interaction is enhanced in the presence of TGF-beta. In terms of assembly, forms a heterodimer with TSC22D4/THG1. Forms a heterodimer with TSC22D4/THG1. Interacts with histone H1-2. Interacts with GNL3.

It is found in the cytoplasm. The protein localises to the nucleus. It localises to the cell membrane. Its subcellular location is the mitochondrion. Functionally, transcriptional repressor. Acts on the C-type natriuretic peptide (CNP) promoter. Acts to promote CASP3-mediated apoptosis. Positively regulates TGF-beta signaling by interacting with SMAD7 which inhibits binding of SMAD7 to TGFBR1, preventing recruitment of SMURF ubiquitin ligases to TGFBR1 and inhibiting SMURF-mediated ubiquitination and degradation of TGFBR1. Contributes to enhancement of TGF-beta signaling by binding to and modulating the transcription activator activity of SMAD4. Promotes TGF-beta-induced transcription of COL1A2; via its interaction with TFE3 at E-boxes in the gene proximal promoter. Plays a role in the repression of hematopoietic precursor cell growth. Promotes IL2 deprivation-induced apoptosis in T-lymphocytes, via repression of TSC22D3/GILZ transcription and activation of the caspase cascade. In terms of biological role, may act to negatively regulate TGFB3 signaling and thereby inhibit cell death in mammary gland cells. Its function is as follows. Positively regulates cell death in response to TGFB3 during mammary gland involution. The sequence is that of TSC22 domain family protein 1 from Pongo abelii (Sumatran orangutan).